The following is a 377-amino-acid chain: Dehydrogenase/reductase SDR family member 13 (377 aa).

Residues 1–25 (MEALLLGAGLLLGAYVLVYYNLVKA) form the signal peptide. NAD(+)-binding residues include Ser46 and Ile48. Ser170 contributes to the substrate binding site. The NAD(+) site is built by Tyr197, Lys201, and Ser232. Tyr197 acts as the Proton acceptor in catalysis. The disordered stretch occupies residues 309-377 (RLAGLGPGED…AKVEPEIQLS (69 aa)). Positions 317–331 (EDAEPDEDPQSEDSE) are enriched in acidic residues. A compositionally biased stretch (low complexity) spans 347–357 (SQPYPSPQSSP). A compositionally biased stretch (basic and acidic residues) spans 368 to 377 (AKVEPEIQLS).

This sequence belongs to the short-chain dehydrogenases/reductases (SDR) family.

It is found in the secreted. Its function is as follows. Putative oxidoreductase. This Homo sapiens (Human) protein is Dehydrogenase/reductase SDR family member 13.